A 172-amino-acid polypeptide reads, in one-letter code: Putative phosphoesterase BCE_1348 (172 aa).

Catalysis depends on histidine 34, which acts as the Proton donor. Short sequence motifs (HXTX) lie at residues 34–37 (HITL) and 115–118 (HLTI). The active-site Proton acceptor is the histidine 115.

The protein belongs to the 2H phosphoesterase superfamily. YjcG family.

The polypeptide is Putative phosphoesterase BCE_1348 (Bacillus cereus (strain ATCC 10987 / NRS 248)).